The following is a 62-amino-acid chain: INGDCELPKVVGPCRARFPRYYYNSSSKRCEKFIYGGCGGNANNFHTLEECEKVCGVRSVGR.

One can recognise a BPTI/Kunitz inhibitor domain in the interval 5 to 55 (CELPKVVGPCRARFPRYYYNSSSKRCEKFIYGGCGGNANNFHTLEECEKVC). Cystine bridges form between Cys5–Cys55, Cys14–Cys38, and Cys30–Cys51.

It belongs to the venom Kunitz-type family. Sea anemone type 2 potassium channel toxin subfamily.

The protein localises to the secreted. It is found in the nematocyst. Serine protease inhibitor that inhibits both tissue and plasma kallikreins. Has hemolytic activity. Inhibits voltage-gated potassium channels. This is KappaPI-actitoxin-Avd3a from Anemonia sulcata (Mediterranean snakelocks sea anemone).